A 483-amino-acid chain; its full sequence is MGDVIVLYASPGMGHIVSMVELGKFIVHRYGPHKFSITILYTCGSIVDTASIPVYIRRISHSHPFISFRQFPRVTNNITRNISVPAITFDFIRQNDPHVRSALQEISKSATVRAFIIDLFCTSALPIGKEFNIPTYYFCTSGAAILAAFLYLPKIDEQTKTTESFKDLRDTVFEFPGWKSPLKATHMVQLVLDRNDPAYSDMIYFCSHLPKSNGIIVNTFEELEPPSVLQAIAGGLCVPDGPTPPVYYVGPLIEEEKELSKDADAAEKEDCLSWLDKQPSRSVLFLCFGSMGSFPAAQLKEIANGLEASGQRFLWVVKKPPVEEKSKQVHGVDDFDLKGVLPEGFLERTADRGMVVKSWAPQVVVLKKESVGGFVTHCGWNSVLEAVVAGVPMIAWPLYAEQHMNRNVLVTDMEIAIGVEQRDEEGGFVSGEEVERRVRELMESEGGRVLRERCKKLGEMASAALGETGSSTRNLVNFVSSIT.

Residue histidine 15 is the Proton acceptor of the active site. Residue histidine 15 participates in an anthocyanidin binding. Aspartate 118 (charge relay) is an active-site residue. Residues threonine 140, alanine 360, glutamine 362, histidine 377, tryptophan 380, asparagine 381, serine 382, and glutamate 385 each coordinate UDP-alpha-D-glucose. Alanine 400 serves as a coordination point for an anthocyanidin. Positions 401 and 402 each coordinate UDP-alpha-D-glucose.

Belongs to the UDP-glycosyltransferase family. In terms of tissue distribution, highly expressed in roots and at lower levels in leaves, flowers and fruits.

It carries out the reaction phloretin + UDP-alpha-D-glucose = phlorizin + UDP + H(+). Glycosyltransferase that possesses phloretin 2'-O-glycosyltransferase activity. Converts phloretin to phlorizin (phloretin 2'-O-glucoside), a potent antioxidant. Is specific for phloretin and does not possess glycosyltransferase activity toward caffeic acid, catechin, chlorogenic acid, 2-coumaric acid, 3-coumaric acid, 4-coumaric acid, cyanidin, 3,4-dihydroxyhydrocinnamic acid, epicatechin, 3-hydroxybenzoic acid, naringenin, 3,4-dihydroxybenzoic acid, quercetin and rutin. Can glycosylate phloretin in the presence of UDP-glucose, UDP-xylose and UDP-galactose. This chain is Phloretin 2'-O-glucosyltransferase, found in Malus domestica (Apple).